Reading from the N-terminus, the 120-residue chain is UPF0145 protein UNCMA_30400 (120 aa).

It belongs to the UPF0145 family.

This chain is UPF0145 protein UNCMA_30400, found in Methanocella arvoryzae (strain DSM 22066 / NBRC 105507 / MRE50).